The sequence spans 26 residues: Small toxic protein ShoB (26 aa).

A helical transmembrane segment spans residues leucine 7 to leucine 24.

Its subcellular location is the membrane. In terms of biological role, toxic component of a type I toxin-antitoxin (TA) system. May be a toxic protein; overexpression causes cessation of growth and rapid membrane depolarization. Overexpression induces stress-response and a number of membrane protein genes. The polypeptide is Small toxic protein ShoB (shoB) (Escherichia coli (strain K12)).